Here is a 125-residue protein sequence, read N- to C-terminus: Apoptosis inhibitor Rv3655c (125 aa).

The first 33 residues, methionine 1 to alanine 33, serve as a signal peptide directing secretion.

In terms of assembly, interacts with human E3 ubiquitin-protein ligase RNF213.

It localises to the secreted. The protein localises to the host cytoplasm. Functionally, effector protein that participates in the suppression of macrophage apoptosis by blocking the extrinsic pathway. Interferes with caspase-8 activation and binds to the host E3 ubiquitin-protein ligase RNF213, whose fusion partners have anti-apoptotic function. The polypeptide is Apoptosis inhibitor Rv3655c (Mycobacterium tuberculosis (strain ATCC 25618 / H37Rv)).